Reading from the N-terminus, the 648-residue chain is Bifunctional lysine-specific demethylase and histidyl-hydroxylase NO66 (648 aa).

Residues 1 to 168 (MSKVSSIFDT…KGAKAAKKNK (168 aa)) form a disordered region. A compositionally biased stretch (low complexity) spans 17–28 (PATTENGAAAKP). Residues 109-119 (DHRKHKEKLRK) are compositionally biased toward basic residues. Residues 123-137 (GVENSRQAAASTSML) show a composition bias toward polar residues. A compositionally biased stretch (basic residues) spans 155–168 (PVHHKGAKAAKKNK). Residues 308–453 (CSIRMLNPQT…DLLELYLPHA (146 aa)) form the JmjC domain. Residues histidine 354, aspartate 356, and histidine 419 each contribute to the Fe cation site.

It belongs to the ROX family. NO66 subfamily. Fe(2+) serves as cofactor.

It localises to the nucleus. It carries out the reaction N(6),N(6)-dimethyl-L-lysyl(36)-[histone H3] + 2 2-oxoglutarate + 2 O2 = L-lysyl(36)-[histone H3] + 2 formaldehyde + 2 succinate + 2 CO2. In terms of biological role, oxygenase that can act as both a histone lysine demethylase and a ribosomal histidine hydroxylase. Specifically demethylates 'Lys-4' (H3K4me) and 'Lys-36' (H3K36me) of histone H3, thereby playing a central role in histone code. The sequence is that of Bifunctional lysine-specific demethylase and histidyl-hydroxylase NO66 from Culex quinquefasciatus (Southern house mosquito).